Reading from the N-terminus, the 374-residue chain is Alanine racemase (374 aa).

Lysine 34 functions as the Proton acceptor; specific for D-alanine in the catalytic mechanism. Lysine 34 bears the N6-(pyridoxal phosphate)lysine mark. Arginine 138 lines the substrate pocket. Tyrosine 265 functions as the Proton acceptor; specific for L-alanine in the catalytic mechanism. Substrate is bound at residue methionine 313.

This sequence belongs to the alanine racemase family. It depends on pyridoxal 5'-phosphate as a cofactor.

The catalysed reaction is L-alanine = D-alanine. It functions in the pathway amino-acid biosynthesis; D-alanine biosynthesis; D-alanine from L-alanine: step 1/1. Catalyzes the interconversion of L-alanine and D-alanine. May also act on other amino acids. The polypeptide is Alanine racemase (alr) (Hahella chejuensis (strain KCTC 2396)).